The primary structure comprises 392 residues: Potassium/proton antiporter CemA (392 aa).

Helical transmembrane passes span 174–194 (FLASLIWIPWIVSWFLRVWWL), 269–289 (SLANLGSDILACLILLAMLSL), 316–336 (FLILVTDVFVGFHSTHGWEVI), and 352–372 (FIFMFVATFPVLLDTVFKYWI).

It belongs to the CemA family.

Its subcellular location is the plastid. It is found in the chloroplast inner membrane. The enzyme catalyses K(+)(in) + H(+)(out) = K(+)(out) + H(+)(in). Its function is as follows. Contributes to K(+)/H(+) antiport activity by supporting proton efflux to control proton extrusion and homeostasis in chloroplasts in a light-dependent manner to modulate photosynthesis. Prevents excessive induction of non-photochemical quenching (NPQ) under continuous-light conditions. Indirectly promotes efficient inorganic carbon uptake into chloroplasts. This chain is Potassium/proton antiporter CemA, found in Nephroselmis olivacea (Green alga).